Reading from the N-terminus, the 42-residue chain is Photosystem I reaction center subunit IX (42 aa).

The chain crosses the membrane as a helical span at residues 7–27 (YLSVAPVLSTLWFGSLAGLLI).

It belongs to the PsaJ family.

It localises to the plastid. Its subcellular location is the chloroplast thylakoid membrane. May help in the organization of the PsaE and PsaF subunits. This Daucus carota (Wild carrot) protein is Photosystem I reaction center subunit IX.